Reading from the N-terminus, the 445-residue chain is ATP-dependent rRNA helicase rrp3 (445 aa).

Basic and acidic residues predominate over residues M1 to S10. Residues M1 to K28 form a disordered region. A compositionally biased stretch (low complexity) spans D17 to K28. The Q motif signature appears at K28–E56. Positions I59–V229 constitute a Helicase ATP-binding domain. Position 72–79 (A72–T79) interacts with ATP. The short motif at D178–D181 is the DEAD box element. The Helicase C-terminal domain maps to K240–M400. A disordered region spans residues L415–G445.

It belongs to the DEAD box helicase family. DDX47/RRP3 subfamily. As to quaternary structure, interacts with the SSU processome.

It localises to the nucleus. The catalysed reaction is ATP + H2O = ADP + phosphate + H(+). Its function is as follows. ATP-dependent rRNA helicase required for pre-ribosomal RNA processing. Involved in the maturation of the 35S-pre-rRNA and to its cleavage to mature 18S rRNA. This chain is ATP-dependent rRNA helicase rrp3, found in Aspergillus terreus (strain NIH 2624 / FGSC A1156).